Consider the following 73-residue polypeptide: Acyl carrier protein (73 aa).

The 73-residue stretch at 1–73 folds into the Carrier domain; the sequence is MAVFEKVQDI…DLVKYVENNK (73 aa). The residue at position 35 (Ser35) is an O-(pantetheine 4'-phosphoryl)serine.

It belongs to the acyl carrier protein (ACP) family. 4'-phosphopantetheine is transferred from CoA to a specific serine of apo-ACP by AcpS. This modification is essential for activity because fatty acids are bound in thioester linkage to the sulfhydryl of the prosthetic group.

The protein localises to the cytoplasm. It functions in the pathway lipid metabolism; fatty acid biosynthesis. Its function is as follows. Carrier of the growing fatty acid chain in fatty acid biosynthesis. The sequence is that of Acyl carrier protein from Lactococcus lactis subsp. lactis (strain IL1403) (Streptococcus lactis).